Here is a 173-residue protein sequence, read N- to C-terminus: Translation initiation factor IF-3 (173 aa).

It belongs to the IF-3 family. As to quaternary structure, monomer.

It localises to the cytoplasm. Its function is as follows. IF-3 binds to the 30S ribosomal subunit and shifts the equilibrium between 70S ribosomes and their 50S and 30S subunits in favor of the free subunits, thus enhancing the availability of 30S subunits on which protein synthesis initiation begins. The chain is Translation initiation factor IF-3 from Bacillus subtilis (strain 168).